A 187-amino-acid chain; its full sequence is Elongation factor P (187 aa).

It belongs to the elongation factor P family.

Its subcellular location is the cytoplasm. Its pathway is protein biosynthesis; polypeptide chain elongation. Involved in peptide bond synthesis. Stimulates efficient translation and peptide-bond synthesis on native or reconstituted 70S ribosomes in vitro. Probably functions indirectly by altering the affinity of the ribosome for aminoacyl-tRNA, thus increasing their reactivity as acceptors for peptidyl transferase. The sequence is that of Elongation factor P from Rhodococcus opacus (strain B4).